The chain runs to 440 residues: 2-methylisoborneol synthase (440 aa).

The interval 1–116 (MPDSGPLGPH…SPAPAEPAAG (116 aa)) is disordered. Residues 17-27 (TPATTVPDAPA) show a composition bias toward low complexity. Pro residues predominate over residues 48–58 (PPVPIPSPSPP). The span at 59–75 (SGSASAAADTPDATTVG) shows a compositional bias: low complexity. The segment covering 102-111 (PSLPGSPAPA) has biased composition (pro residues). Mg(2+) contacts are provided by Asp-197, Asp-198, Glu-202, Asn-345, Ser-349, and Glu-353.

The protein belongs to the terpene synthase family. 2-methylisoborneol synthase subfamily. Mg(2+) serves as cofactor.

The catalysed reaction is (E)-2-methylgeranyl diphosphate + H2O = 2-methylisoborneol + diphosphate. Functionally, catalyzes the cyclization of 2-methylgeranyl diphosphate (2-MeGPP) to 2-methylisoborneol (2-MIB), which likely involves the intermediacy of 2-methyllinalyl diphosphate. The polypeptide is 2-methylisoborneol synthase (Streptomyces ambofaciens (strain ATCC 23877 / 3486 / DSM 40053 / JCM 4204 / NBRC 12836 / NRRL B-2516)).